A 362-amino-acid chain; its full sequence is Methylthioribose-1-phosphate isomerase (362 aa).

Residue Asp-252 is the Proton donor of the active site.

Belongs to the eIF-2B alpha/beta/delta subunits family. MtnA subfamily.

The protein localises to the cytoplasm. The protein resides in the nucleus. The enzyme catalyses 5-(methylsulfanyl)-alpha-D-ribose 1-phosphate = 5-(methylsulfanyl)-D-ribulose 1-phosphate. Its pathway is amino-acid biosynthesis; L-methionine biosynthesis via salvage pathway; L-methionine from S-methyl-5-thio-alpha-D-ribose 1-phosphate: step 1/6. Catalyzes the interconversion of methylthioribose-1-phosphate (MTR-1-P) into methylthioribulose-1-phosphate (MTRu-1-P). The protein is Methylthioribose-1-phosphate isomerase of Drosophila mojavensis (Fruit fly).